The chain runs to 67 residues: MLYPSIDNLLLKIDSKYSLVTVAAKRARYMQLENDKGVLPSYQSDKFVGKALEEIHAGKLVLKNDEK.

It belongs to the RNA polymerase subunit omega family. The RNAP catalytic core consists of 2 alpha, 1 beta, 1 beta' and 1 omega subunit. When a sigma factor is associated with the core the holoenzyme is formed, which can initiate transcription.

It carries out the reaction RNA(n) + a ribonucleoside 5'-triphosphate = RNA(n+1) + diphosphate. In terms of biological role, promotes RNA polymerase assembly. Latches the N- and C-terminal regions of the beta' subunit thereby facilitating its interaction with the beta and alpha subunits. This is DNA-directed RNA polymerase subunit omega from Listeria welshimeri serovar 6b (strain ATCC 35897 / DSM 20650 / CCUG 15529 / CIP 8149 / NCTC 11857 / SLCC 5334 / V8).